The primary structure comprises 298 residues: Ribosomal protein L11 methyltransferase (298 aa).

S-adenosyl-L-methionine is bound by residues Thr-150, Gly-171, Asp-193, and Asn-232.

Belongs to the methyltransferase superfamily. PrmA family.

It is found in the cytoplasm. It carries out the reaction L-lysyl-[protein] + 3 S-adenosyl-L-methionine = N(6),N(6),N(6)-trimethyl-L-lysyl-[protein] + 3 S-adenosyl-L-homocysteine + 3 H(+). Methylates ribosomal protein L11. This Chromobacterium violaceum (strain ATCC 12472 / DSM 30191 / JCM 1249 / CCUG 213 / NBRC 12614 / NCIMB 9131 / NCTC 9757 / MK) protein is Ribosomal protein L11 methyltransferase.